Consider the following 311-residue polypeptide: Tryptophan 2,3-dioxygenase (311 aa).

Residues 1–37 (MQPPGGDAPAGCPFSGARAAQPAQAAHEAPHVPGEAD) form a disordered region. Low complexity predominate over residues 17–27 (ARAAQPAQAAH). Residues 80 to 84 (FIIQH), Tyr142, and Arg146 contribute to the substrate site. His269 lines the heme pocket. Thr283 contributes to the substrate binding site.

It belongs to the tryptophan 2,3-dioxygenase family. Homotetramer. The cofactor is heme.

The catalysed reaction is L-tryptophan + O2 = N-formyl-L-kynurenine. It participates in amino-acid degradation; L-tryptophan degradation via kynurenine pathway; L-kynurenine from L-tryptophan: step 1/2. Functionally, heme-dependent dioxygenase that catalyzes the oxidative cleavage of the L-tryptophan (L-Trp) pyrrole ring and converts L-tryptophan to N-formyl-L-kynurenine. Catalyzes the oxidative cleavage of the indole moiety. This is Tryptophan 2,3-dioxygenase from Burkholderia orbicola (strain MC0-3).